The chain runs to 481 residues: Glutamyl-tRNA(Gln) amidotransferase subunit A (481 aa).

Active-site charge relay system residues include Lys77 and Ser151. Ser175 functions as the Acyl-ester intermediate in the catalytic mechanism.

This sequence belongs to the amidase family. GatA subfamily. As to quaternary structure, heterotrimer of A, B and C subunits.

The enzyme catalyses L-glutamyl-tRNA(Gln) + L-glutamine + ATP + H2O = L-glutaminyl-tRNA(Gln) + L-glutamate + ADP + phosphate + H(+). Functionally, allows the formation of correctly charged Gln-tRNA(Gln) through the transamidation of misacylated Glu-tRNA(Gln) in organisms which lack glutaminyl-tRNA synthetase. The reaction takes place in the presence of glutamine and ATP through an activated gamma-phospho-Glu-tRNA(Gln). The protein is Glutamyl-tRNA(Gln) amidotransferase subunit A of Rubrobacter xylanophilus (strain DSM 9941 / JCM 11954 / NBRC 16129 / PRD-1).